The primary structure comprises 460 residues: L-seryl-tRNA(Sec) selenium transferase (460 aa).

An N6-(pyridoxal phosphate)lysine modification is found at K293.

It belongs to the SelA family. The cofactor is pyridoxal 5'-phosphate.

The protein resides in the cytoplasm. It carries out the reaction L-seryl-tRNA(Sec) + selenophosphate + H(+) = L-selenocysteinyl-tRNA(Sec) + phosphate. The protein operates within aminoacyl-tRNA biosynthesis; selenocysteinyl-tRNA(Sec) biosynthesis; selenocysteinyl-tRNA(Sec) from L-seryl-tRNA(Sec) (bacterial route): step 1/1. Converts seryl-tRNA(Sec) to selenocysteinyl-tRNA(Sec) required for selenoprotein biosynthesis. This Pasteurella multocida (strain Pm70) protein is L-seryl-tRNA(Sec) selenium transferase.